Consider the following 271-residue polypeptide: 60 kDa heat shock protein, mitochondrial (271 aa).

Phosphoserine is present on residues Ser-30 and Ser-33. Residue 50-54 (DGTTT) participates in ATP binding. Lys-83 bears the N6-acetyllysine mark. An N6-acetyllysine; alternate mark is found at Lys-84, Lys-97, and Lys-112. N6-succinyllysine; alternate occurs at positions 84, 97, and 112. Lys-125 is modified (N6-acetyllysine). An N6-acetyllysine; alternate modification is found at Lys-126. Residue Lys-126 is modified to N6-succinyllysine; alternate. At Lys-145 the chain carries N6-acetyllysine. N6-succinyllysine is present on Lys-175. 2 positions are modified to N6-acetyllysine: Lys-188 and Lys-237. Gly-257 lines the ATP pocket. At Lys-270 the chain carries N6-acetyllysine.

This sequence belongs to the chaperonin (HSP60) family. In terms of assembly, homoheptamer arranged in a ring structure. The functional units of these chaperonins consist of heptameric rings of the large subunit Hsp60, which function as a back-to-back double ring. Interacts with 2 heptameric Hsp10 rings to form the symmetrical football complex. Interacts with HRAS. Interacts with ATAD3A. Interacts with ETFBKMT and EEF1AKMT3. Interacts with MFHAS1. As to expression, detected at higher levels in caput epididymal spermatazoa than in cauda epididymal spermatazoa (at protein level).

The protein resides in the mitochondrion matrix. The catalysed reaction is ATP + H2O + a folded polypeptide = ADP + phosphate + an unfolded polypeptide.. In terms of biological role, chaperonin implicated in mitochondrial protein import and macromolecular assembly. Together with Hsp10, facilitates the correct folding of imported proteins. May also prevent misfolding and promote the refolding and proper assembly of unfolded polypeptides generated under stress conditions in the mitochondrial matrix. The functional units of these chaperonins consist of heptameric rings of the large subunit Hsp60, which function as a back-to-back double ring. In a cyclic reaction, Hsp60 ring complexes bind one unfolded substrate protein per ring, followed by the binding of ATP and association with 2 heptameric rings of the co-chaperonin Hsp10. This leads to sequestration of the substrate protein in the inner cavity of Hsp60 where, for a certain period of time, it can fold undisturbed by other cell components. Synchronous hydrolysis of ATP in all Hsp60 subunits results in the dissociation of the chaperonin rings and the release of ADP and the folded substrate protein. This is 60 kDa heat shock protein, mitochondrial from Mesocricetus auratus (Golden hamster).